We begin with the raw amino-acid sequence, 193 residues long: AP-3 complex subunit sigma-1 (193 aa).

Serine 191 is subject to Phosphoserine.

Belongs to the adaptor complexes small subunit family. As to quaternary structure, adaptor protein complex 3 (AP-3) is a heterotetramer composed of two large adaptins (delta-type subunit AP3D1 and beta-type subunit AP3B1 or AP3B2), a medium adaptin (mu-type subunit AP3M1 or AP3M2) and a small adaptin (sigma-type subunit APS1 or AP3S2). Interacts with AGAP1. AP-3 associates with the BLOC-1 complex.

The protein resides in the golgi apparatus. The protein localises to the cytoplasmic vesicle membrane. Part of the AP-3 complex, an adaptor-related complex which is not clathrin-associated. The complex is associated with the Golgi region as well as more peripheral structures. It facilitates the budding of vesicles from the Golgi membrane and may be directly involved in trafficking to lysosomes. In concert with the BLOC-1 complex, AP-3 is required to target cargos into vesicles assembled at cell bodies for delivery into neurites and nerve terminals. This Bos taurus (Bovine) protein is AP-3 complex subunit sigma-1 (AP3S1).